The chain runs to 405 residues: Na(+)-translocating NADH-quinone reductase subunit F (405 aa).

Residues 3 to 23 traverse the membrane as a helical segment; it reads IILGIVMFTVIVLALALMILF. One can recognise a 2Fe-2S ferredoxin-type domain in the interval 32 to 124; it reads GDITIKVNDE…DMDIEVPEEV (93 aa). Residues C67, C73, C76, and C108 each coordinate [2Fe-2S] cluster. In terms of domain architecture, FAD-binding FR-type spans 127–267; that stretch reads VKKWECTVIS…SGPFGEFFAK (141 aa).

Belongs to the NqrF family. In terms of assembly, composed of six subunits; NqrA, NqrB, NqrC, NqrD, NqrE and NqrF. [2Fe-2S] cluster serves as cofactor. The cofactor is FAD.

It localises to the cell inner membrane. It catalyses the reaction a ubiquinone + n Na(+)(in) + NADH + H(+) = a ubiquinol + n Na(+)(out) + NAD(+). Its function is as follows. NQR complex catalyzes the reduction of ubiquinone-1 to ubiquinol by two successive reactions, coupled with the transport of Na(+) ions from the cytoplasm to the periplasm. The first step is catalyzed by NqrF, which accepts electrons from NADH and reduces ubiquinone-1 to ubisemiquinone by a one-electron transfer pathway. The sequence is that of Na(+)-translocating NADH-quinone reductase subunit F from Neisseria gonorrhoeae (strain ATCC 700825 / FA 1090).